The sequence spans 275 residues: MSDLYAVIGNPVAHSKSPLIHAGFARQSGQDVRYEAILAPLDGFVETVAAFRQRGGKGANVTVPFKLEAHTLSSCLTERAKAAGAVNTLVFGADDILGDNTDGAGLVRDVAVNLGYALDDRRVLLMGAGGAARGVIRPLLEHEPAALVIANRTPQKADDLQRLFASSGNVLSAAYEDLRGQEFDLVINATSASLQGDLPPLPKGIFAGASLAYDMMYGKGLTSFLQFAQQQGAARLADGIGMLVEQAAESFFLWRGIRPETEPVIGMLRSSLGSP.

Residues 15-17 and Thr62 each bind shikimate; that span reads SKS. The active-site Proton acceptor is the Lys66. Glu78 contributes to the NADP(+) binding site. Shikimate-binding residues include Asn87 and Asp102. Residues 127-131, 151-156, and Met215 contribute to the NADP(+) site; these read GAGGA and NRTPQK. Tyr217 is a binding site for shikimate. Gly239 is a binding site for NADP(+).

This sequence belongs to the shikimate dehydrogenase family. Homodimer.

The catalysed reaction is shikimate + NADP(+) = 3-dehydroshikimate + NADPH + H(+). Its pathway is metabolic intermediate biosynthesis; chorismate biosynthesis; chorismate from D-erythrose 4-phosphate and phosphoenolpyruvate: step 4/7. Its function is as follows. Involved in the biosynthesis of the chorismate, which leads to the biosynthesis of aromatic amino acids. Catalyzes the reversible NADPH linked reduction of 3-dehydroshikimate (DHSA) to yield shikimate (SA). This chain is Shikimate dehydrogenase (NADP(+)), found in Nitrosospira multiformis (strain ATCC 25196 / NCIMB 11849 / C 71).